The following is a 126-amino-acid chain: C-type natriuretic peptide (126 aa).

A signal peptide spans 1–23 (MHLSQLLACALLLTLLSLRPSEA). A disordered region spans residues 20–71 (PSEAKPGAPPKVPRTPPAEELAEPQAAGGGQKKGDKAPGGGGANLKGDRSRL). The propeptide occupies 24–73 (KPGAPPKVPRTPPAEELAEPQAAGGGQKKGDKAPGGGGANLKGDRSRLLR). Over residues 26–35 (GAPPKVPRTP) the composition is skewed to pro residues. Over residues 46-63 (AGGGQKKGDKAPGGGGAN) the composition is skewed to gly residues. Cys110 and Cys126 are disulfide-bonded.

This sequence belongs to the natriuretic peptide family. In terms of processing, degraded by IDE (in vitro). In terms of tissue distribution, in the kidney, predominantly expressed in the distal tubular cells (at protein level).

The protein localises to the secreted. Functionally, hormone which plays a role in endochondral ossification through regulation of cartilaginous growth plate chondrocytes proliferation and differentiation. May also be vasoactive and natriuretic. Acts by specifically binding and stimulating NPR2 to produce cGMP. Binds the clearance receptor NPR3. In Homo sapiens (Human), this protein is C-type natriuretic peptide (NPPC).